Reading from the N-terminus, the 88-residue chain is Small ribosomal subunit protein bS20 (88 aa).

It belongs to the bacterial ribosomal protein bS20 family.

Its function is as follows. Binds directly to 16S ribosomal RNA. The chain is Small ribosomal subunit protein bS20 from Aromatoleum aromaticum (strain DSM 19018 / LMG 30748 / EbN1) (Azoarcus sp. (strain EbN1)).